Reading from the N-terminus, the 379-residue chain is Acetylornithine aminotransferase (379 aa).

Pyridoxal 5'-phosphate contacts are provided by residues 93 to 94 and phenylalanine 120; that span reads GA. Position 123 (arginine 123) interacts with N(2)-acetyl-L-ornithine. 205–208 serves as a coordination point for pyridoxal 5'-phosphate; the sequence is DEVQ. Residue lysine 234 is modified to N6-(pyridoxal phosphate)lysine. Serine 262 serves as a coordination point for N(2)-acetyl-L-ornithine. Pyridoxal 5'-phosphate is bound at residue threonine 263.

It belongs to the class-III pyridoxal-phosphate-dependent aminotransferase family. ArgD subfamily. As to quaternary structure, homodimer. Pyridoxal 5'-phosphate is required as a cofactor.

It localises to the cytoplasm. The catalysed reaction is N(2)-acetyl-L-ornithine + 2-oxoglutarate = N-acetyl-L-glutamate 5-semialdehyde + L-glutamate. The protein operates within amino-acid biosynthesis; L-arginine biosynthesis; N(2)-acetyl-L-ornithine from L-glutamate: step 4/4. This is Acetylornithine aminotransferase from Streptococcus mutans serotype c (strain ATCC 700610 / UA159).